The sequence spans 201 residues: Imidazoleglycerol-phosphate dehydratase (201 aa).

It belongs to the imidazoleglycerol-phosphate dehydratase family.

Its subcellular location is the cytoplasm. The catalysed reaction is D-erythro-1-(imidazol-4-yl)glycerol 3-phosphate = 3-(imidazol-4-yl)-2-oxopropyl phosphate + H2O. It participates in amino-acid biosynthesis; L-histidine biosynthesis; L-histidine from 5-phospho-alpha-D-ribose 1-diphosphate: step 6/9. This is Imidazoleglycerol-phosphate dehydratase from Prochlorococcus marinus (strain AS9601).